The following is a 662-amino-acid chain: DNA ligase (662 aa).

NAD(+) contacts are provided by residues 31 to 35, 80 to 81, and Glu-109; these read DYEYD and SL. Lys-111 functions as the N6-AMP-lysine intermediate in the catalytic mechanism. Positions 132, 166, 282, and 306 each coordinate NAD(+). Positions 400, 403, 418, and 423 each coordinate Zn(2+). Residues 581-662 form the BRCT domain; sequence KVNNIFEGKT…FEEMLKGENI (82 aa).

This sequence belongs to the NAD-dependent DNA ligase family. LigA subfamily. Requires Mg(2+) as cofactor. The cofactor is Mn(2+).

It catalyses the reaction NAD(+) + (deoxyribonucleotide)n-3'-hydroxyl + 5'-phospho-(deoxyribonucleotide)m = (deoxyribonucleotide)n+m + AMP + beta-nicotinamide D-nucleotide.. DNA ligase that catalyzes the formation of phosphodiester linkages between 5'-phosphoryl and 3'-hydroxyl groups in double-stranded DNA using NAD as a coenzyme and as the energy source for the reaction. It is essential for DNA replication and repair of damaged DNA. This chain is DNA ligase, found in Thermoanaerobacter pseudethanolicus (strain ATCC 33223 / 39E) (Clostridium thermohydrosulfuricum).